Consider the following 389-residue polypeptide: Alanine racemase (389 aa).

The active-site Proton acceptor; specific for D-alanine is the Lys-48. Position 48 is an N6-(pyridoxal phosphate)lysine (Lys-48). Arg-144 is a substrate binding site. Tyr-281 acts as the Proton acceptor; specific for L-alanine in catalysis. Met-329 provides a ligand contact to substrate.

This sequence belongs to the alanine racemase family. Pyridoxal 5'-phosphate is required as a cofactor.

The enzyme catalyses L-alanine = D-alanine. It functions in the pathway amino-acid biosynthesis; D-alanine biosynthesis; D-alanine from L-alanine: step 1/1. Functionally, catalyzes the interconversion of L-alanine and D-alanine. May also act on other amino acids. The chain is Alanine racemase (alr) from Leptospira interrogans serogroup Icterohaemorrhagiae serovar copenhageni (strain Fiocruz L1-130).